An 870-amino-acid chain; its full sequence is DNA mismatch repair protein MutS (870 aa).

Position 616 to 623 (616 to 623 (GPNMAGKS)) interacts with ATP.

This sequence belongs to the DNA mismatch repair MutS family.

Functionally, this protein is involved in the repair of mismatches in DNA. It is possible that it carries out the mismatch recognition step. This protein has a weak ATPase activity. The sequence is that of DNA mismatch repair protein MutS from Parabacteroides distasonis (strain ATCC 8503 / DSM 20701 / CIP 104284 / JCM 5825 / NCTC 11152).